The sequence spans 417 residues: UPF0754 membrane protein PCC8801_0398 (417 aa).

2 consecutive transmembrane segments (helical) span residues 11–31 (FSLLWTIALPPIAGTIIGYFT) and 395–415 (IVNIGGVLGFLVGVFQSILLI).

Belongs to the UPF0754 family.

The protein localises to the cell inner membrane. This chain is UPF0754 membrane protein PCC8801_0398, found in Rippkaea orientalis (strain PCC 8801 / RF-1) (Cyanothece sp. (strain PCC 8801)).